The following is a 428-amino-acid chain: Putative G-protein coupled receptor F59B2.13 (428 aa).

Residues M1–E30 lie on the Extracellular side of the membrane. Residues N3 and N4 are each glycosylated (N-linked (GlcNAc...) asparagine). A helical membrane pass occupies residues G31–L51. The Cytoplasmic segment spans residues N52–Q67. Residues L68–M88 traverse the membrane as a helical segment. The Extracellular portion of the chain corresponds to A89 to Q110. Residues I111–L131 traverse the membrane as a helical segment. The Cytoplasmic segment spans residues E132–N154. The helical transmembrane segment at V155–A175 threads the bilayer. The Extracellular segment spans residues C176–N222. N183 carries an N-linked (GlcNAc...) asparagine glycan. Residues A223–L243 traverse the membrane as a helical segment. Over T244–T278 the chain is Cytoplasmic. A helical membrane pass occupies residues V279 to L299. The Extracellular segment spans residues S300–T309. Residues L310–C330 form a helical membrane-spanning segment. Residues L331–V428 are Cytoplasmic-facing.

It belongs to the G-protein coupled receptor 1 family.

The protein resides in the cell membrane. In Caenorhabditis elegans, this protein is Putative G-protein coupled receptor F59B2.13.